A 127-amino-acid polypeptide reads, in one-letter code: Spore germination protein 2 (127 aa).

Positions 1 to 25 (MNIRNSLILIISTILFFSIINGSLS) are cleaved as a signal peptide. Residues N54 and N118 are each glycosylated (N-linked (GlcNAc...) asparagine).

Belongs to the Dictyostelium gerABC family.

Its subcellular location is the secreted. This Dictyostelium discoideum (Social amoeba) protein is Spore germination protein 2 (gerB).